A 273-amino-acid polypeptide reads, in one-letter code: Ribosomal RNA small subunit methyltransferase A (273 aa).

Positions 18, 20, 45, 66, 91, and 113 each coordinate S-adenosyl-L-methionine.

It belongs to the class I-like SAM-binding methyltransferase superfamily. rRNA adenine N(6)-methyltransferase family. RsmA subfamily.

The protein localises to the cytoplasm. The catalysed reaction is adenosine(1518)/adenosine(1519) in 16S rRNA + 4 S-adenosyl-L-methionine = N(6)-dimethyladenosine(1518)/N(6)-dimethyladenosine(1519) in 16S rRNA + 4 S-adenosyl-L-homocysteine + 4 H(+). Its function is as follows. Specifically dimethylates two adjacent adenosines (A1518 and A1519) in the loop of a conserved hairpin near the 3'-end of 16S rRNA in the 30S particle. May play a critical role in biogenesis of 30S subunits. The protein is Ribosomal RNA small subunit methyltransferase A of Escherichia coli O139:H28 (strain E24377A / ETEC).